Here is a 233-residue protein sequence, read N- to C-terminus: Uridylate kinase (233 aa).

7–10 (KISG) is an ATP binding site. Glycine 49 is a binding site for UMP. ATP-binding residues include glycine 50 and arginine 54. UMP-binding positions include aspartate 68 and 129-136 (TGNPFFTT). Threonine 156, tyrosine 162, and aspartate 165 together coordinate ATP.

This sequence belongs to the UMP kinase family. Homohexamer.

Its subcellular location is the cytoplasm. The enzyme catalyses UMP + ATP = UDP + ADP. It participates in pyrimidine metabolism; CTP biosynthesis via de novo pathway; UDP from UMP (UMPK route): step 1/1. Its activity is regulated as follows. Inhibited by UTP. Functionally, catalyzes the reversible phosphorylation of UMP to UDP. The protein is Uridylate kinase of Neorickettsia sennetsu (strain ATCC VR-367 / Miyayama) (Ehrlichia sennetsu).